The sequence spans 491 residues: Glutamate--tRNA ligase (491 aa).

Residues 12–22 (PSPTGTPHVGL) carry the 'HIGH' region motif. The tract at residues 111–134 (STPEEVEERHKAAGRDPKLGYDNF) is disordered. Over residues 117–134 (EERHKAAGRDPKLGYDNF) the composition is skewed to basic and acidic residues. A 'KMSKS' region motif is present at residues 256–260 (KLSKR). ATP is bound at residue Lys-259.

The protein belongs to the class-I aminoacyl-tRNA synthetase family. Glutamate--tRNA ligase type 1 subfamily. In terms of assembly, monomer.

It is found in the cytoplasm. It carries out the reaction tRNA(Glu) + L-glutamate + ATP = L-glutamyl-tRNA(Glu) + AMP + diphosphate. Catalyzes the attachment of glutamate to tRNA(Glu) in a two-step reaction: glutamate is first activated by ATP to form Glu-AMP and then transferred to the acceptor end of tRNA(Glu). The chain is Glutamate--tRNA ligase from Rhodococcus jostii (strain RHA1).